The chain runs to 136 residues: Classical arabinogalactan protein 26 (136 aa).

An N-terminal signal peptide occupies residues 1–21 (MSVSLFTAFTVLSLCLHTSTS). The disordered stretch occupies residues 38–95 (APSSFSASTPAMSPDTSPLFPTPGSSEMSPSPSESSIMPTIPSSLSPPNPDAVTPDPL). Residues 40–53 (SSFSASTPAMSPDT) are compositionally biased toward polar residues. Residues 59 to 81 (TPGSSEMSPSPSESSIMPTIPSS) are compositionally biased toward low complexity. A lipid anchor (GPI-anchor amidated serine) is attached at Ser-108. Positions 109 to 136 (SSVCLVSSQLSSLLLVLLMLLLAFCSFF) are cleaved as a propeptide — removed in mature form.

The protein belongs to the classical AGP family. Post-translationally, O-glycosylated on the hydroxyproline residues.

The protein resides in the cell membrane. In terms of biological role, proteoglycan that seems to be implicated in diverse developmental roles such as differentiation, cell-cell recognition, embryogenesis and programmed cell death. The chain is Classical arabinogalactan protein 26 (AGP26) from Arabidopsis thaliana (Mouse-ear cress).